The following is a 158-amino-acid chain: Protein-export protein SecB (158 aa).

This sequence belongs to the SecB family. Homotetramer, a dimer of dimers. One homotetramer interacts with 1 SecA dimer.

The protein resides in the cytoplasm. Functionally, one of the proteins required for the normal export of preproteins out of the cell cytoplasm. It is a molecular chaperone that binds to a subset of precursor proteins, maintaining them in a translocation-competent state. It also specifically binds to its receptor SecA. This Anaplasma phagocytophilum (strain HZ) protein is Protein-export protein SecB.